The chain runs to 390 residues: METFLFTSESVNEGHPDKLCDQVSDAILDACLEQDPESKVACETCTKTNMVMVFGEITTKATVDYEKIVRDTCRGIGFVSADVGLDADNCKVLVNIEQQSPDIAQGVHGHLTKKPEEIGAGDQGHMFGYATDETPELMPLTHVLATKLGAKLTEVRKNKTCPWLRPDGKTQVTVEYKNDNGAMVPIRVHTVLISTQHDETVTNDQIAQDLKEHVIKPVIPAKYLDENTIFHLNPSGRFVIGGPHGDAGLTGRKIIIDTYGGWGAHGGGAFSGKDPTKVDRSGAYIVRQAAKSVVASGLARRCIVQVSYAIGVAEPLSVFVDTYKTGTIPDKDILVLIKENFDFRPGMMSINLDLLRGGNYRYQKTAAYGHFGRDDPDFTWETVKVLKPKA.

Position 9 (E9) interacts with Mg(2+). An ATP-binding site is contributed by H15. E43 provides a ligand contact to K(+). L-methionine contacts are provided by E56 and Q99. ATP contacts are provided by residues 167–169 (DGK), 235–238 (SGRF), D246, 252–253 (RK), A269, K273, and K277. Residue D246 coordinates L-methionine. Position 277 (K277) interacts with L-methionine.

This sequence belongs to the AdoMet synthase family. Homotetramer. Requires Mn(2+) as cofactor. The cofactor is Mg(2+). Co(2+) is required as a cofactor. K(+) serves as cofactor. In terms of tissue distribution, mostly expressed in stems and leaves.

It localises to the cytoplasm. It carries out the reaction L-methionine + ATP + H2O = S-adenosyl-L-methionine + phosphate + diphosphate. It functions in the pathway amino-acid biosynthesis; S-adenosyl-L-methionine biosynthesis; S-adenosyl-L-methionine from L-methionine: step 1/1. Functionally, catalyzes the formation of S-adenosylmethionine from methionine and ATP. The reaction comprises two steps that are both catalyzed by the same enzyme: formation of S-adenosylmethionine (AdoMet) and triphosphate, and subsequent hydrolysis of the triphosphate. This Solanum lycopersicum (Tomato) protein is S-adenosylmethionine synthase 3 (SAM3).